The primary structure comprises 992 residues: Leucine-rich repeat receptor-like serine/threonine-protein kinase BAM3 (992 aa).

The first 21 residues, 1-21 (MADKIFTFFLILSSISPLLCS), serve as a signal peptide directing secretion. Over 22–656 (SLISPLNLSL…ARSRGEISAK (635 aa)) the chain is Extracellular. The N-linked (GlcNAc...) asparagine glycan is linked to Asn28. A disulfide bridge links Cys64 with Cys71. Asn75 and Asn87 each carry an N-linked (GlcNAc...) asparagine glycan. LRR repeat units lie at residues 75–99 (NQSI…ISRL), 100–124 (SPSL…IYEL), 126–148 (GLEV…GFSQ), 150–173 (TQLV…LTTL), 174–199 (TRLE…SFLS), and 201–221 (KFLS…LANI). 2 N-linked (GlcNAc...) asparagine glycosylation sites follow: Asn131 and Asn163. Asn220 carries an N-linked (GlcNAc...) asparagine glycan. The short motif at 226-231 (QLYLGY) is the CLE45 peptide binding element. LRR repeat units lie at residues 246–270 (LINL…LGNL), 271–294 (KNLE…LGNM), 296–320 (SLKT…GLQK), 322–342 (QLFN…VSEL), 343–366 (PDLQ…LGSN), 368–391 (NLIE…CFGR), 393–414 (LKIL…LGQC), 415–438 (EPLW…LIYL), 439–462 (PNLS…EAGN), 465–489 (FSSL…IRNL), 491–513 (SLQI…IGSL), 514–536 (KSLL…EFGD), 537–561 (CMSL…ISQI), 563–585 (ILNY…LGYM), and 586–610 (KSLT…QFSY). Residues Asn256 and Asn293 are each glycosylated (N-linked (GlcNAc...) asparagine). A glycan (N-linked (GlcNAc...) asparagine) is linked at Asn354. Residues Asn440 and Asn472 are each glycosylated (N-linked (GlcNAc...) asparagine). Residue Asn525 is glycosylated (N-linked (GlcNAc...) asparagine). N-linked (GlcNAc...) asparagine glycans are attached at residues Asn568, Asn575, Asn597, Asn613, Asn631, and Asn635. The helical transmembrane segment at 657 to 677 (FKLFFGLGLLGFFLVFVVLAV) threads the bilayer. The Cytoplasmic segment spans residues 678–992 (VKNRRMRKNN…ISQAKQPNTF (315 aa)). Positions 710–992 (VKENHVIGKG…ISQAKQPNTF (283 aa)) constitute a Protein kinase domain. ATP is bound by residues 716–724 (IGKGGRGIV) and Lys738. Catalysis depends on Asp836, which acts as the Proton acceptor.

Belongs to the protein kinase superfamily. Ser/Thr protein kinase family. In terms of assembly, interacts with CLE45, especially in roots. Binds to the dimer CLV2/CRN. In terms of tissue distribution, expressed in seedlings, roots, leaves, stems, inflorescences, flowers and siliques. In roots, confined to protophloem and sieve element precursor cells.

The protein resides in the cell membrane. It is found in the endoplasmic reticulum membrane. The enzyme catalyses L-seryl-[protein] + ATP = O-phospho-L-seryl-[protein] + ADP + H(+). The catalysed reaction is L-threonyl-[protein] + ATP = O-phospho-L-threonyl-[protein] + ADP + H(+). Necessary for male gametophyte development, as well as ovule specification and function. Required for the development of high-ordered vascular strands within the leaf and a correlated control of leaf shape, size and symmetry. LRR-rich receptor-like kinase (LRR-RLK) involved in the perception of CLE45 peptide ligand which mediates root growth inhibition by repressing protophloem differentiation; this mechanism requires CRN. BRX, BAM3, and CLE45 act together to regulate the transition of protophloem cells from proliferation to differentiation, thus impinging on postembryonic growth capacity of the root meristem. Necessary for CLE45 peptide-triggered accumulation of MAKR5 in developing sieve elements. The protein is Leucine-rich repeat receptor-like serine/threonine-protein kinase BAM3 of Arabidopsis thaliana (Mouse-ear cress).